The primary structure comprises 245 residues: 23S rRNA (guanosine-2'-O-)-methyltransferase RlmB (245 aa).

3 residues coordinate S-adenosyl-L-methionine: Gly197, Ile217, and Leu226.

The protein belongs to the class IV-like SAM-binding methyltransferase superfamily. RNA methyltransferase TrmH family. RlmB subfamily.

The protein localises to the cytoplasm. It catalyses the reaction guanosine(2251) in 23S rRNA + S-adenosyl-L-methionine = 2'-O-methylguanosine(2251) in 23S rRNA + S-adenosyl-L-homocysteine + H(+). Its function is as follows. Specifically methylates the ribose of guanosine 2251 in 23S rRNA. This chain is 23S rRNA (guanosine-2'-O-)-methyltransferase RlmB, found in Pasteurella multocida (strain Pm70).